We begin with the raw amino-acid sequence, 65 residues long: Large ribosomal subunit protein bL35 (65 aa).

This sequence belongs to the bacterial ribosomal protein bL35 family.

In Burkholderia ambifaria (strain MC40-6), this protein is Large ribosomal subunit protein bL35.